Consider the following 547-residue polypeptide: Probable bifunctional tRNA threonylcarbamoyladenosine biosynthesis protein (547 aa).

A kae1 region spans residues 1–329 (MKKTFILGIE…FRTDDVKVTW (329 aa)). Residues H113, H117, and Y134 each coordinate Fe cation. L-threonylcarbamoyladenylate-binding positions include 134 to 138 (YVSGA), D166, G179, E183, and N262. D290 lines the Fe cation pocket. The region spanning 340–547 (EISPETFFRM…EEIKKRARYA (208 aa)) is the Protein kinase domain. Residues 355-363 (LDNGAEAVV) and K377 each bind ATP. D464 functions as the Proton acceptor; for kinase activity in the catalytic mechanism.

It in the N-terminal section; belongs to the KAE1 / TsaD family. In the C-terminal section; belongs to the protein kinase superfamily. Tyr protein kinase family. BUD32 subfamily. In terms of assembly, component of the KEOPS complex that consists of Kae1, Bud32, Cgi121 and Pcc1; the whole complex dimerizes. Fe(2+) serves as cofactor.

It is found in the cytoplasm. The enzyme catalyses L-seryl-[protein] + ATP = O-phospho-L-seryl-[protein] + ADP + H(+). It carries out the reaction L-threonyl-[protein] + ATP = O-phospho-L-threonyl-[protein] + ADP + H(+). It catalyses the reaction L-threonylcarbamoyladenylate + adenosine(37) in tRNA = N(6)-L-threonylcarbamoyladenosine(37) in tRNA + AMP + H(+). Functionally, required for the formation of a threonylcarbamoyl group on adenosine at position 37 (t(6)A37) in tRNAs that read codons beginning with adenine. Is a component of the KEOPS complex that is probably involved in the transfer of the threonylcarbamoyl moiety of threonylcarbamoyl-AMP (TC-AMP) to the N6 group of A37. The Kae1 domain likely plays a direct catalytic role in this reaction. The Bud32 domain probably displays kinase activity that regulates Kae1 function. This is Probable bifunctional tRNA threonylcarbamoyladenosine biosynthesis protein from Methanosarcina mazei (strain ATCC BAA-159 / DSM 3647 / Goe1 / Go1 / JCM 11833 / OCM 88) (Methanosarcina frisia).